The following is a 391-amino-acid chain: DDGGALHAPGSVIQKENNKNDKKILELMSNIIQLLTGEVAIRTHHVSIYFSLDEWDYITGNKDLYEEGMKEEPQQLHPLAACEYKDESNVAAHTEATLCCNNDGNFTEMSPVEQPPPANGIKEEVASWEGGNQSDCSINKCTEQIQGTDTPTPIMGYRMNNSLLENYISNAIKEETASCEEINQSNCSINPLTEQIQGTDTPTPIMGYSLFRIPCNKSDESADTSPHKSRITKKTLHKKNSCVVSHKITPIGEKPVSTSGCGKYFMKSSELSVHPRTHTGEKPFPCSECGKCFINQSTLARHYRTHTGEKPYPCSECGKCFASSTYLRDHRRIHTGEKLSSCSECGKYFLNCWSLARHHRTHTGEKPYSCSECGKSFAISSDLAGHRRRTH.

4 consecutive C2H2-type zinc fingers follow at residues 284-306 (FPCSECGKCFINQSTLARHYRTH), 312-334 (YPCSECGKCFASSTYLRDHRRIH), 340-362 (SSCSECGKYFLNCWSLARHHRTH), and 368-391 (YSCSECGKSFAISSDLAGHRRRTH).

Belongs to the krueppel C2H2-type zinc-finger protein family.

It is found in the nucleus. May be involved in transcriptional regulation. This chain is Oocyte zinc finger protein XlCOF7.2, found in Xenopus laevis (African clawed frog).